The chain runs to 603 residues: Carbon catabolite repressor protein 4 homolog 2 (603 aa).

Residues 115 to 136 (ENNANEDDDLNRNNSAGSGSLA) form a disordered region. Positions 126–136 (RNNSAGSGSLA) are enriched in low complexity. Glu302 contributes to the Mg(2+) binding site.

This sequence belongs to the CCR4/nocturin family. As to quaternary structure, component of the CCR4-NOT complex, at least composed of CRR4 and CAF1 proteins. Requires Mg(2+) as cofactor.

The protein resides in the nucleus. It localises to the cytoplasm. It catalyses the reaction Exonucleolytic cleavage of poly(A) to 5'-AMP.. Functionally, acts as a catalytic component of the CCR4-NOT core complex, which in the nucleus seems to be a general transcription factor, and in the cytoplasm the major mRNA deadenylase involved in mRNA turnover. The chain is Carbon catabolite repressor protein 4 homolog 2 (CCR4-2) from Arabidopsis thaliana (Mouse-ear cress).